A 242-amino-acid polypeptide reads, in one-letter code: Type III pantothenate kinase (242 aa).

ATP is bound at residue 5 to 12 (DLGNTRLK). Substrate-binding positions include Tyr-94 and 100 to 103 (GCDR). Asp-102 (proton acceptor) is an active-site residue. Residue Thr-124 participates in ATP binding. Thr-175 contributes to the substrate binding site.

Belongs to the type III pantothenate kinase family. In terms of assembly, homodimer. The cofactor is NH4(+). Requires K(+) as cofactor.

The protein resides in the cytoplasm. The enzyme catalyses (R)-pantothenate + ATP = (R)-4'-phosphopantothenate + ADP + H(+). It participates in cofactor biosynthesis; coenzyme A biosynthesis; CoA from (R)-pantothenate: step 1/5. In terms of biological role, catalyzes the phosphorylation of pantothenate (Pan), the first step in CoA biosynthesis. The polypeptide is Type III pantothenate kinase (Psychrobacter arcticus (strain DSM 17307 / VKM B-2377 / 273-4)).